The following is a 140-amino-acid chain: Translation initiation factor 2 subunit beta (140 aa).

The protein belongs to the eIF-2-beta/eIF-5 family. As to quaternary structure, heterotrimer composed of an alpha, a beta and a gamma chain.

In terms of biological role, eIF-2 functions in the early steps of protein synthesis by forming a ternary complex with GTP and initiator tRNA. The sequence is that of Translation initiation factor 2 subunit beta from Metallosphaera sedula (strain ATCC 51363 / DSM 5348 / JCM 9185 / NBRC 15509 / TH2).